A 124-amino-acid polypeptide reads, in one-letter code: Probable glycine cleavage system H protein (124 aa).

One can recognise a Lipoyl-binding domain in the interval 23–104 (VATVGITDYA…PYKNWLVKIR (82 aa)). The residue at position 64 (lysine 64) is an N6-lipoyllysine.

The protein belongs to the GcvH family. As to quaternary structure, the glycine cleavage system is composed of four proteins: P, T, L and H. (R)-lipoate serves as cofactor.

In terms of biological role, the glycine cleavage system catalyzes the degradation of glycine. The H protein shuttles the methylamine group of glycine from the P protein to the T protein. The chain is Probable glycine cleavage system H protein from Picrophilus torridus (strain ATCC 700027 / DSM 9790 / JCM 10055 / NBRC 100828 / KAW 2/3).